Consider the following 290-residue polypeptide: O-methyltransferase agiB (290 aa).

Position 155 (D155) interacts with S-adenosyl-L-methionine. The active-site Proton acceptor is H194.

Belongs to the class I-like SAM-binding methyltransferase superfamily. Cation-independent O-methyltransferase family.

The protein operates within secondary metabolite biosynthesis. In terms of biological role, O-methyltransferase; part of the gene cluster that mediates the biosynthesis of the aspergillicins A and F, 2 cryptic cyclic hexa-depsipeptides. The hexamodular NRPS agiA catalyzes the condensation of the six amino acid residues including N-Me-L-O-Me-tyrosine, L-proline 1, L-proline 2, D-isoleucine, O-acetyl-threonine, and L-isoleucine. The starting condensation domain (C1) of agiA probably loads acetyl-CoA which is condensed on the N-terminus of threonine by the first module to yield O-acetyl-threonine. The second module then loads L-isoleucine. The epimerase (E) domain on module 2 is probably involved in the formation of the D-isoleucine moiety. Modules 3 and 4 further load 2 successive L-prolines. Module 5 is then involved in the condensation of O-Me-L-tyrosine produced by the O-methyltransferase agiB and the N-methyl transferase (NMeT) domain on module 5 probably catalyzes the N-methylation to yield the N-Me-L-O-Me-tyrosine moiety. The A domain of module 5 loads preferentially O-Me-L-tyrosine, but it can also accept L-phenylalanine, which leads to the production of aspergillicin G. Module 6 then loads the last residue, L-isoleucine. The C-terminal thiolesterase (TE) domain probably cyclizes the peptide using the hydroxy group from threonine to form the cyclic depsipeptide. The chain is O-methyltransferase agiB from Aspergillus flavus (strain ATCC 200026 / FGSC A1120 / IAM 13836 / NRRL 3357 / JCM 12722 / SRRC 167).